A 135-amino-acid polypeptide reads, in one-letter code: Evasin P1134 (135 aa).

The N-terminal stretch at 1-31 is a signal peptide; the sequence is MEVKTFAFLQIAVFIALGIQIFAAVTAAADA. 3 disulfides stabilise this stretch: cysteine 41/cysteine 63, cysteine 45/cysteine 65, and cysteine 56/cysteine 76. N-linked (GlcNAc...) asparagine glycosylation is present at asparagine 44. The interval 88–112 is disordered; sequence ETPSNSDLEAATPRPRKTLYPVRNP.

It is found in the secreted. Salivary chemokine-binding protein which binds to host chemokine CXCL1. The chain is Evasin P1134 from Ixodes ricinus (Common tick).